A 243-amino-acid polypeptide reads, in one-letter code: MRYLVDTHTHTIVSGHAYTTFLENVQEASNIGLKVLGTTDHGPSMPGGPNLFYFNNFKVMPRKLKGVTLLHGCEANIIDFKGMLDIPDFTQKKLDVIIASLHDVCIRPGSVEENTEALINVMENPYVDILGHIGNPSFPINEEVVVKKAKEKNVLIEINNGSFVSRKGSEETCKKVANLCKKHKVNIIVGSDSHVCFQIGRFPKADNMLKEIGMPEELIINNEENKILEYLKNKGKLKDLNLD.

Histidine 8, histidine 10, histidine 16, histidine 41, glutamate 74, histidine 102, histidine 132, aspartate 192, and histidine 194 together coordinate Zn(2+).

This sequence belongs to the PHP family. The cofactor is Zn(2+).

This chain is Probable phosphatase CLD_1129, found in Clostridium botulinum (strain Okra / Type B1).